The chain runs to 140 residues: MFKEFKEFAFKGNVLDLAVAVVMGAAFNKIITSLVTYIIMPLIGLIFGTVDFAKNWSFMGIKYGLFVQSVIDFLIVAFALFLFVKLANTLMRKEEVEEEPEENIVLLTEIRDLLQQQNGTVTNETTNIFTETDDVDNKKF.

The next 3 membrane-spanning stretches (helical) occupy residues 7-27 (EFAF…GAAF), 30-50 (IITS…FGTV), and 64-84 (GLFV…FLFV).

The protein belongs to the MscL family. In terms of assembly, homopentamer.

It localises to the cell membrane. Functionally, channel that opens in response to stretch forces in the membrane lipid bilayer. May participate in the regulation of osmotic pressure changes within the cell. The sequence is that of Large-conductance mechanosensitive channel from Staphylococcus carnosus (strain TM300).